The chain runs to 260 residues: 1-(5-phosphoribosyl)-5-[(5-phosphoribosylamino)methylideneamino] imidazole-4-carboxamide isomerase (260 aa).

The active-site Proton acceptor is D8. The active-site Proton donor is the D130.

Belongs to the HisA/HisF family.

It localises to the cytoplasm. The catalysed reaction is 1-(5-phospho-beta-D-ribosyl)-5-[(5-phospho-beta-D-ribosylamino)methylideneamino]imidazole-4-carboxamide = 5-[(5-phospho-1-deoxy-D-ribulos-1-ylimino)methylamino]-1-(5-phospho-beta-D-ribosyl)imidazole-4-carboxamide. The protein operates within amino-acid biosynthesis; L-histidine biosynthesis; L-histidine from 5-phospho-alpha-D-ribose 1-diphosphate: step 4/9. The polypeptide is 1-(5-phosphoribosyl)-5-[(5-phosphoribosylamino)methylideneamino] imidazole-4-carboxamide isomerase (Chlorobaculum tepidum (strain ATCC 49652 / DSM 12025 / NBRC 103806 / TLS) (Chlorobium tepidum)).